Consider the following 181-residue polypeptide: ATP-dependent protease subunit HslV (181 aa).

Thr-7 is a catalytic residue. Ala-162, Cys-165, and Thr-168 together coordinate Na(+).

It belongs to the peptidase T1B family. HslV subfamily. A double ring-shaped homohexamer of HslV is capped on each side by a ring-shaped HslU homohexamer. The assembly of the HslU/HslV complex is dependent on binding of ATP.

It localises to the cytoplasm. It carries out the reaction ATP-dependent cleavage of peptide bonds with broad specificity.. With respect to regulation, allosterically activated by HslU binding. Functionally, protease subunit of a proteasome-like degradation complex believed to be a general protein degrading machinery. This is ATP-dependent protease subunit HslV from Coxiella burnetii (strain RSA 331 / Henzerling II).